We begin with the raw amino-acid sequence, 335 residues long: MSERIGVIGAGSWGTTLANLLARKGLDVTLWAYEAELVEEMRATRVNSLFLPGIELAPALSFTNSLEEAATGKDFLVLVSPSQVMRGVLAQLAPLLRPGVVLVNASKGIELDTLMTMDQVCAAVLPPEVARCFSVLSGPSFAREVSLEMPTAVVAASGDPAVAAAVQRLFTTPSFRVYTNTDVVGVEIGGALKNVIAVAAGISDGLGLGHNTRAALITRGLAEMTRLGLSMGAQPETFAGLAGMGDLVLTCTGDLSRNRTVGMKLGQGMKLADVLGEMRMVAEGVKTAESAYRLARRTGVEMPITEKVYQVLHEDKPARQAVMELMTRDLKAERW.

NADPH contacts are provided by serine 12, tryptophan 13, and lysine 107. Sn-glycerol 3-phosphate is bound by residues lysine 107, glycine 138, and serine 140. NADPH is bound at residue alanine 142. The sn-glycerol 3-phosphate site is built by lysine 193, aspartate 246, serine 256, arginine 257, and asparagine 258. Lysine 193 functions as the Proton acceptor in the catalytic mechanism. Arginine 257 lines the NADPH pocket. Valine 281 and glutamate 283 together coordinate NADPH.

Belongs to the NAD-dependent glycerol-3-phosphate dehydrogenase family.

Its subcellular location is the cytoplasm. The catalysed reaction is sn-glycerol 3-phosphate + NAD(+) = dihydroxyacetone phosphate + NADH + H(+). It carries out the reaction sn-glycerol 3-phosphate + NADP(+) = dihydroxyacetone phosphate + NADPH + H(+). It participates in membrane lipid metabolism; glycerophospholipid metabolism. In terms of biological role, catalyzes the reduction of the glycolytic intermediate dihydroxyacetone phosphate (DHAP) to sn-glycerol 3-phosphate (G3P), the key precursor for phospholipid synthesis. This is Glycerol-3-phosphate dehydrogenase [NAD(P)+] from Geobacter sulfurreducens (strain ATCC 51573 / DSM 12127 / PCA).